The following is a 419-amino-acid chain: Gamma-glutamyl phosphate reductase (419 aa).

It belongs to the gamma-glutamyl phosphate reductase family.

It localises to the cytoplasm. The enzyme catalyses L-glutamate 5-semialdehyde + phosphate + NADP(+) = L-glutamyl 5-phosphate + NADPH + H(+). The protein operates within amino-acid biosynthesis; L-proline biosynthesis; L-glutamate 5-semialdehyde from L-glutamate: step 2/2. Catalyzes the NADPH-dependent reduction of L-glutamate 5-phosphate into L-glutamate 5-semialdehyde and phosphate. The product spontaneously undergoes cyclization to form 1-pyrroline-5-carboxylate. The protein is Gamma-glutamyl phosphate reductase of Gloeobacter violaceus (strain ATCC 29082 / PCC 7421).